The following is a 1265-amino-acid chain: Nestin (1265 aa).

Residues 1-16 (MELLGVRQPFGPQFQE) form a head region. The tract at residues 17-52 (EKYQMLELNHRLESYLGRVKLLEEENKLLREEIHTL) is coil 1A. The region spanning 17–324 (EKYQMLELNH…ALLDSEGLRI (308 aa)) is the IF rod domain. Residues 53–64 (KSSRDPAGQRKA) are linker 1. Positions 65–160 (QEEALSQARR…QVHQENMETM (96 aa)) are coil 1B. The tract at residues 161-183 (QASLKQTKQVLMAPQRVQATSIP) is linker 12. The coil 2A stretch occupies residues 184 to 203 (DLGQEYGYKAAQAWQEAANN). A linker 2 region spans residues 204 to 206 (YQK). The coil 2B stretch occupies residues 207–324 (QVGRLEESLN…ALLDSEGLRI (118 aa)). The segment at 325–1265 (DRPTPNKTSS…EGDSWSSGDE (941 aa)) is tail. Over residues 383 to 402 (PSWTLTRGTPQRPPSSTSMT) the composition is skewed to polar residues. 5 disordered regions span residues 383–521 (PSWT…TEVS), 667–830 (FEVE…PDME), 863–1073 (HESL…KASQ), 1093–1116 (AQTT…LESS), and 1232–1265 (IRDD…SGDE). A compositionally biased stretch (basic and acidic residues) spans 403–418 (EKTEDHISEETKRSAE). The span at 422-441 (DQLQQEKVQQDWTLESTLPK) shows a compositional bias: polar residues. Residues 444–459 (AEPKPELQPEEIKVED) show a composition bias toward basic and acidic residues. Positions 479 to 496 (LTSVPAEQQGSMSQTPET) are enriched in polar residues. 2 stretches are compositionally biased toward acidic residues: residues 508 to 520 (EVSE…DTEV) and 730 to 739 (LNEDQSEAEE). 3 stretches are compositionally biased toward basic and acidic residues: residues 784–796 (YKSD…HIGE), 803–819 (EKER…RFNT), and 863–897 (HESL…KEED). Polar residues predominate over residues 901-910 (FEQNENQQLT). Positions 911 to 935 (EHQHVHTEQVEDKPVHSHETQEHVN) are enriched in basic and acidic residues. Residues 943–956 (SERSQQEQLEESSL) show a composition bias toward low complexity. The span at 1015-1043 (PNASQCFQNTSLLAAATPNEQPLTFTNEV) shows a compositional bias: polar residues. Residues 1061–1070 (SEEKSTDEPK) show a composition bias toward basic and acidic residues. 2 stretches are compositionally biased toward polar residues: residues 1105–1116 (SISPVNENLESS) and 1242–1251 (PAQSKIVQSD). Over residues 1252-1265 (DSADEGDSWSSGDE) the composition is skewed to acidic residues.

This sequence belongs to the intermediate filament family. As to quaternary structure, forms homodimers and homotetramers in vitro. In mixtures with other intermediate filament proteins such as vimentin and alpha-internexin, preferentially forms heterodimers. In terms of tissue distribution, widely expressed throughout the developing nervous system at 24 hours post-fertilization (hpf). As development progresses, expression becomes restricted to proliferative zones of the developing and postembryonic central nervous system. In the peripheral nervous system, expressed in the cranial ganglia. Also expressed in mesodermal muscle precursor cells and in cranial mesenchymal tissue.

Functionally, promotes the disassembly of phosphorylated vimentin intermediate filaments (IF) during mitosis and may play a role in the trafficking and distribution of IF proteins and other cellular factors to daughter cells during progenitor cell division. Required for survival, renewal and mitogen-stimulated proliferation of neural progenitor cells. Required for brain and eye development. In Danio rerio (Zebrafish), this protein is Nestin (nes).